We begin with the raw amino-acid sequence, 473 residues long: Phosphatidylserine synthase 1 (473 aa).

Ala2 carries the post-translational modification N-acetylalanine. The Cytoplasmic portion of the chain corresponds to 2–35 (ASCVGSRTLSKDDVNYRMHFRMINEQQVEDITID). A helical membrane pass occupies residues 36-56 (FFYRPHTITLLSFTIISLMYF). Residues 57–72 (AFTRDDSVPEDNIWRG) are Lumenal-facing. Residues 73 to 93 (ILSVIFFFLIISVLAFPNGPF) traverse the membrane as a helical segment. Over 94-102 (TRPHPALWR) the chain is Cytoplasmic. The chain crosses the membrane as a helical span at residues 103-123 (MVFGLSVLYFLFLVFLLFLNF). Over 124–186 (EQVKSLMYWL…AMKALLIRSY (63 aa)) the chain is Lumenal. Residues 187-207 (GLCWTISITWELTELFFMHLL) form a helical membrane-spanning segment. The Cytoplasmic portion of the chain corresponds to 208–216 (PNFAECWWD). A helical membrane pass occupies residues 217–237 (QVILDILLCNGGGIWLGMVVC). The Lumenal segment spans residues 238–286 (RFLEMRTYHWASFKDIHTTTGKIKRAVLQFTPASWTYVRWFDPKSSFQR). Residues 287-307 (VAGIYLFMIIWQLTELNTFFL) traverse the membrane as a helical segment. Residues 308–319 (KHIFVFQASHPL) are Cytoplasmic-facing. The helical transmembrane segment at 320 to 342 (SWGRILFIGCITAPTVRQYYAYL) threads the bilayer. Topologically, residues 343–355 (TDTQCKRVGTQCW) are lumenal. The chain crosses the membrane as a helical span at residues 356–376 (VFGVIGFLEAIVCIKFGQDLF). The Cytoplasmic portion of the chain corresponds to 377–383 (SKTQILY). Residues 384-404 (VMLWLLCVAFTTFLCLYGMVW) form a helical membrane-spanning segment. The Lumenal segment spans residues 405–473 (YAEHYGHREK…SKVTNGVGKK (69 aa)). Ser417, Ser425, Ser442, and Ser454 each carry phosphoserine. A disordered region spans residues 428–473 (ISWHHGKGSKGSEDSPPKHSSNHESHSSRRRNRHSKSKVTNGVGKK). Positions 437–454 (KGSEDSPPKHSSNHESHS) are enriched in basic and acidic residues. Residues 455-464 (SRRRNRHSKS) are compositionally biased toward basic residues.

It belongs to the phosphatidyl serine synthase family. In terms of tissue distribution, expressed in kidney, testis, lung, skeletal muscle, liver brain, heart and spleen with highest expression in testis, liver, heart and brain.

Its subcellular location is the endoplasmic reticulum membrane. It catalyses the reaction a 1,2-diacyl-sn-glycero-3-phosphoethanolamine + L-serine = a 1,2-diacyl-sn-glycero-3-phospho-L-serine + ethanolamine. It carries out the reaction a 1,2-diacyl-sn-glycero-3-phosphocholine + L-serine = a 1,2-diacyl-sn-glycero-3-phospho-L-serine + choline. It participates in phospholipid metabolism; phosphatidylserine biosynthesis. With respect to regulation, potently inhibited by choline in the mitochondria-associated membrane (MAM). Very little inhibition by choline in the endoplasmic reticulum (ER) per se. Functionally, catalyzes a base-exchange reaction in which the polar head group of phosphatidylethanolamine (PE) or phosphatidylcholine (PC) is replaced by L-serine. Catalyzes mainly the conversion of phosphatidylcholine. Also converts, in vitro and to a lesser extent, phosphatidylethanolamine. The protein is Phosphatidylserine synthase 1 (Ptdss1) of Mus musculus (Mouse).